A 172-amino-acid chain; its full sequence is 3-hydroxydecanoyl-[acyl-carrier-protein] dehydratase (172 aa).

The active site involves His71.

Belongs to the thioester dehydratase family. FabA subfamily. Homodimer.

Its subcellular location is the cytoplasm. It catalyses the reaction a (3R)-hydroxyacyl-[ACP] = a (2E)-enoyl-[ACP] + H2O. The catalysed reaction is (3R)-hydroxydecanoyl-[ACP] = (2E)-decenoyl-[ACP] + H2O. It carries out the reaction (2E)-decenoyl-[ACP] = (3Z)-decenoyl-[ACP]. The protein operates within lipid metabolism; fatty acid biosynthesis. Necessary for the introduction of cis unsaturation into fatty acids. Catalyzes the dehydration of (3R)-3-hydroxydecanoyl-ACP to E-(2)-decenoyl-ACP and then its isomerization to Z-(3)-decenoyl-ACP. Can catalyze the dehydratase reaction for beta-hydroxyacyl-ACPs with saturated chain lengths up to 16:0, being most active on intermediate chain length. The polypeptide is 3-hydroxydecanoyl-[acyl-carrier-protein] dehydratase (Enterobacter sp. (strain 638)).